Reading from the N-terminus, the 138-residue chain is Ribulose bisphosphate carboxylase small subunit (138 aa).

This sequence belongs to the RuBisCO small chain family. As to quaternary structure, heterohexadecamer of 8 large and 8 small subunits.

The protein localises to the plastid. The protein resides in the chloroplast. In terms of biological role, ruBisCO catalyzes two reactions: the carboxylation of D-ribulose 1,5-bisphosphate, the primary event in carbon dioxide fixation, as well as the oxidative fragmentation of the pentose substrate in the photorespiration process. Both reactions occur simultaneously and in competition at the same active site. Although the small subunit is not catalytic it is essential for maximal activity. The protein is Ribulose bisphosphate carboxylase small subunit of Pyropia yezoensis (Susabi-nori).